A 1350-amino-acid chain; its full sequence is Ubiquitin carboxyl-terminal hydrolase 47 (1350 aa).

The tract at residues 111-138 is disordered; it reads DGEQPQLTSDESGTADSSGLDDSSQEKF. The segment covering 115–132 has biased composition (polar residues); the sequence is PQLTSDESGTADSSGLDD. Positions 173-548 constitute a USP domain; that stretch reads VGLVNQAMTC…NAYMLMYRLK (376 aa). Residue Cys-182 is the Nucleophile of the active site. The disordered stretch occupies residues 409-437; sequence EDEKSPQTDSCTDSGAENEGSCHSDQMSN. The segment covering 415 to 437 has biased composition (polar residues); it reads QTDSCTDSGAENEGSCHSDQMSN. The Proton acceptor role is filled by His-487. Disordered stretches follow at residues 815–836 and 859–1000; these read HPRP…PQED and SLQQ…ESGK. The segment covering 859 to 877 has biased composition (polar residues); it reads SLQQHQDGGNGDSSKSTEG. A compositionally biased stretch (basic and acidic residues) spans 916-926; the sequence is PEERSDSDVNN. Low complexity predominate over residues 929-945; sequence STSSVDSDILSSSHSSD. Basic and acidic residues predominate over residues 973-982; sequence KANDGKKETW. Positions 983 to 996 are enriched in acidic residues; the sequence is DTAEEDSGTDSEYD.

It belongs to the peptidase C19 family. USP47 subfamily.

It localises to the cytoplasm. It carries out the reaction Thiol-dependent hydrolysis of ester, thioester, amide, peptide and isopeptide bonds formed by the C-terminal Gly of ubiquitin (a 76-residue protein attached to proteins as an intracellular targeting signal).. Functionally, ubiquitin-specific protease that specifically deubiquitinates monoubiquitinated DNA polymerase beta (polb), stabilizing polb thereby playing a role in base-excision repair (BER). The protein is Ubiquitin carboxyl-terminal hydrolase 47 (usp47) of Xenopus laevis (African clawed frog).